A 258-amino-acid polypeptide reads, in one-letter code: Regulatory protein RecX (258 aa).

This sequence belongs to the RecX family.

Its subcellular location is the cytoplasm. Modulates RecA activity. This is Regulatory protein RecX from Streptococcus pneumoniae (strain Hungary19A-6).